The chain runs to 172 residues: Putative Dresden prostate carcinoma protein 2 (172 aa).

Residues 40–61 are disordered; sequence QCEEEEAMTPRPTKARAPLPSA.

In terms of tissue distribution, very high expression in prostate and prostate cancer. Faint expression in other tissues.

This is Putative Dresden prostate carcinoma protein 2 (HMGN2P46) from Homo sapiens (Human).